Consider the following 466-residue polypeptide: Ras-GEF domain-containing family member 1C (466 aa).

The segment at 1–37 is disordered; the sequence is MPQTLSASDMVTPGSLSPPPTEPTDGEQAGQPLLDGA. The N-terminal Ras-GEF domain occupies 34-164; the sequence is LDGAPSSASL…LLQALHQKLA (131 aa). A Ras-GEF domain is found at 200 to 446; it reads DPYTLAQQLT…YLASYESESP (247 aa).

In terms of biological role, guanine nucleotide exchange factor (GEF). This Homo sapiens (Human) protein is Ras-GEF domain-containing family member 1C (RASGEF1C).